Reading from the N-terminus, the 359-residue chain is Transcription factor MYB115 (359 aa).

Positions 1–17 are enriched in polar residues; sequence MYHQNLISSTPNQNSNP. Residues 1 to 21 form a disordered region; it reads MYHQNLISSTPNQNSNPHDWD. HTH myb-type domains lie at 153-208 and 209-259; these read KDII…RPNI and KKND…RRLH. 2 consecutive DNA-binding regions (H-T-H motif) follow at residues 181–204 and 232–255; these read WTSI…HNHL and WTEI…NATK.

In terms of tissue distribution, accumulates in reproductive organs (e.g. flowers and siliques). Expressed at very low levels in vegetative organs.

It is found in the nucleus. Functionally, transcription activator that recognizes the motif 5'-TAACGG-3' in the promoter of target genes. Promotes vegetative-to-embryonic transition and the formation of somatic embryos from root explants in a WUS-independent manner. Together with MYB118, activates the transcription of S-ACP-DES2/AAD2 and S-ACP-DES3/AAD3 thus promoting the biosynthesis of omega-7 monounsaturated fatty acid in seed endosperm. This is Transcription factor MYB115 from Arabidopsis thaliana (Mouse-ear cress).